The sequence spans 27 residues: uncharacterized protein (27 aa).

A helical membrane pass occupies residues 6 to 26 (IIVLGALIALLELIRFLLQLL).

It belongs to the DinQ family.

It localises to the cell inner membrane. This is an uncharacterized protein from Escherichia coli (strain K12).